The sequence spans 34 residues: Cytochrome b6-f complex subunit 7 (34 aa).

The helical transmembrane segment at 9–29 (ALLSFGLIFVGWALGALLLKI) threads the bilayer.

This sequence belongs to the PetM family. In terms of assembly, the 4 large subunits of the cytochrome b6-f complex are cytochrome b6, subunit IV (17 kDa polypeptide, PetD), cytochrome f and the Rieske protein, while the 4 small subunits are PetG, PetL, PetM and PetN. The complex functions as a dimer.

The protein localises to the cellular thylakoid membrane. In terms of biological role, component of the cytochrome b6-f complex, which mediates electron transfer between photosystem II (PSII) and photosystem I (PSI), cyclic electron flow around PSI, and state transitions. The polypeptide is Cytochrome b6-f complex subunit 7 (Nostoc sp. (strain PCC 7120 / SAG 25.82 / UTEX 2576)).